We begin with the raw amino-acid sequence, 275 residues long: Hydroxyethylthiazole kinase (275 aa).

A substrate-binding site is contributed by Met-50. Residues Arg-126 and Ser-171 each contribute to the ATP site. Residue Ala-200 participates in substrate binding.

The protein belongs to the Thz kinase family. Requires Mg(2+) as cofactor.

The catalysed reaction is 5-(2-hydroxyethyl)-4-methylthiazole + ATP = 4-methyl-5-(2-phosphooxyethyl)-thiazole + ADP + H(+). The protein operates within cofactor biosynthesis; thiamine diphosphate biosynthesis; 4-methyl-5-(2-phosphoethyl)-thiazole from 5-(2-hydroxyethyl)-4-methylthiazole: step 1/1. Functionally, catalyzes the phosphorylation of the hydroxyl group of 4-methyl-5-beta-hydroxyethylthiazole (THZ). The polypeptide is Hydroxyethylthiazole kinase (Acinetobacter baumannii (strain SDF)).